We begin with the raw amino-acid sequence, 511 residues long: 2-isopropylmalate synthase (511 aa).

The region spanning 4 to 266 is the Pyruvate carboxyltransferase domain; the sequence is IDIFDTTLRD…ETGIQLQEIK (263 aa). Mn(2+)-binding residues include aspartate 13, histidine 201, histidine 203, and asparagine 237. The tract at residues 392-511 is regulatory domain; it reads ELKMVQVQYG…IKESLRAHPV (120 aa).

This sequence belongs to the alpha-IPM synthase/homocitrate synthase family. LeuA type 1 subfamily. Homodimer. It depends on Mn(2+) as a cofactor.

It localises to the cytoplasm. It catalyses the reaction 3-methyl-2-oxobutanoate + acetyl-CoA + H2O = (2S)-2-isopropylmalate + CoA + H(+). It participates in amino-acid biosynthesis; L-leucine biosynthesis; L-leucine from 3-methyl-2-oxobutanoate: step 1/4. Catalyzes the condensation of the acetyl group of acetyl-CoA with 3-methyl-2-oxobutanoate (2-ketoisovalerate) to form 3-carboxy-3-hydroxy-4-methylpentanoate (2-isopropylmalate). The chain is 2-isopropylmalate synthase from Lysinibacillus sphaericus (strain C3-41).